We begin with the raw amino-acid sequence, 102 residues long: Cytochrome b (102 aa).

The next 3 helical transmembrane spans lie at 1–21 (FGSL…FLAM), 45–66 (WLIR…YMHI), and 81–101 (WNIG…GYVF). Residues H51 and H65 each contribute to the heme b site.

Belongs to the cytochrome b family. In terms of assembly, the cytochrome bc1 complex contains 3 respiratory subunits (MT-CYB, CYC1 and UQCRFS1), 2 core proteins (UQCRC1 and UQCRC2) and probably 6 low-molecular weight proteins. Heme b is required as a cofactor.

The protein localises to the mitochondrion inner membrane. In terms of biological role, component of the ubiquinol-cytochrome c reductase complex (complex III or cytochrome b-c1 complex) that is part of the mitochondrial respiratory chain. The b-c1 complex mediates electron transfer from ubiquinol to cytochrome c. Contributes to the generation of a proton gradient across the mitochondrial membrane that is then used for ATP synthesis. The chain is Cytochrome b (mt-cyb) from Plethodon yonahlossee (Yonahlossee salamander).